The sequence spans 295 residues: MTDTSTTARRIVFVTGPSGAGRSSALNVLEDAGFEVVDNLPLRLLDAFLDVPSSAQPLALGIDPRNRDFSTTVIVDALGKLTGIPGLAPELLYLDCSTEVLLRRFSETRRRHPLAPVDRPSEGIVRELEMLGPLKARADVLIDTTHLNVHELRAEVEHWFAPGGKRRLSVSVQSFSYKRGLPRSVDMVFDCRFLTNPYWVPELRSLNGTHDLVKKYVTADARFEQFARKVDDLSLLLLPAYRDEGKSYLSIAFGCTGGQHRSVVMAQCHALRLAEEGWQVSIRHRELDLRKNEET.

An ATP-binding site is contributed by 16–23 (GPSGAGRS). 63–66 (DPRN) serves as a coordination point for GTP.

This sequence belongs to the RapZ-like family.

In terms of biological role, displays ATPase and GTPase activities. The polypeptide is Nucleotide-binding protein RD1_1380 (Roseobacter denitrificans (strain ATCC 33942 / OCh 114) (Erythrobacter sp. (strain OCh 114))).